The sequence spans 393 residues: Phosphoglycerate kinase (393 aa).

Residues 21–23, Arg36, 59–62, Arg114, and Arg147 contribute to the substrate site; these read DIN and HFGR. ATP is bound by residues Lys197, Glu319, and 349–352; that span reads GGDT.

The protein belongs to the phosphoglycerate kinase family. Monomer.

It is found in the cytoplasm. It carries out the reaction (2R)-3-phosphoglycerate + ATP = (2R)-3-phospho-glyceroyl phosphate + ADP. The protein operates within carbohydrate degradation; glycolysis; pyruvate from D-glyceraldehyde 3-phosphate: step 2/5. In Dinoroseobacter shibae (strain DSM 16493 / NCIMB 14021 / DFL 12), this protein is Phosphoglycerate kinase.